The following is a 198-amino-acid chain: Transmembrane protein 17 (198 aa).

Residues Asn-13 and Asn-23 are each glycosylated (N-linked (GlcNAc...) asparagine). The next 4 membrane-spanning stretches (helical) occupy residues 45–65 (MSLY…IMML), 78–98 (FIVV…LYLG), 110–130 (LAGF…FLLF), and 142–162 (AVHI…FLTL).

This sequence belongs to the TMEM17 family. Part of the tectonic-like complex (also named B9 complex).

Its subcellular location is the cell projection. It is found in the cilium membrane. In terms of biological role, transmembrane component of the tectonic-like complex, a complex localized at the transition zone of primary cilia and acting as a barrier that prevents diffusion of transmembrane proteins between the cilia and plasma membranes. Required for ciliogenesis and sonic hedgehog/SHH signaling. The sequence is that of Transmembrane protein 17 (TMEM17) from Bos taurus (Bovine).